A 386-amino-acid polypeptide reads, in one-letter code: AT-hook motif nuclear-localized protein 8 (386 aa).

Disordered regions lie at residues 1-175 (MDSR…LGGT) and 303-372 (KQSS…LHPH). Over residues 54 to 70 (QQQSQTFHQQQQQQMDQ) the composition is skewed to low complexity. Positions 101–110 (VKKKRGRPRK) are enriched in basic residues. The Bipartite nuclear localization signal signature appears at 102–110 (KKKRGRPRK). The segment at residues 102–114 (KKKRGRPRKYTPD) is a DNA-binding region (a.T hook 1). Residues 126-135 (PLLSAASNSY) are compositionally biased toward polar residues. Gly residues predominate over residues 136 to 147 (GEGGVGDSGGNG). Positions 155-167 (KRNRGRPPGSSKK) form a DNA-binding region, a.T hook 2. The region spanning 174 to 316 (GTSGVGFTPH…VNIARGQNPE (143 aa)) is the PPC domain. Low complexity-rich tracts occupy residues 328 to 337 (GSVSQGPSSE) and 361 to 372 (QQQQQQQPLHPH).

Its subcellular location is the nucleus. Transcription factor that specifically binds AT-rich DNA sequences related to the nuclear matrix attachment regions (MARs). The polypeptide is AT-hook motif nuclear-localized protein 8 (Arabidopsis thaliana (Mouse-ear cress)).